The primary structure comprises 337 residues: tRNA N6-adenosine threonylcarbamoyltransferase (337 aa).

Fe cation contacts are provided by His111 and His115. Residues 134–138, Asp167, Gly180, and Asn272 each bind substrate; that span reads LVSGG. Position 300 (Asp300) interacts with Fe cation.

The protein belongs to the KAE1 / TsaD family. The cofactor is Fe(2+).

Its subcellular location is the cytoplasm. It catalyses the reaction L-threonylcarbamoyladenylate + adenosine(37) in tRNA = N(6)-L-threonylcarbamoyladenosine(37) in tRNA + AMP + H(+). In terms of biological role, required for the formation of a threonylcarbamoyl group on adenosine at position 37 (t(6)A37) in tRNAs that read codons beginning with adenine. Is involved in the transfer of the threonylcarbamoyl moiety of threonylcarbamoyl-AMP (TC-AMP) to the N6 group of A37, together with TsaE and TsaB. TsaD likely plays a direct catalytic role in this reaction. The chain is tRNA N6-adenosine threonylcarbamoyltransferase from Yersinia enterocolitica serotype O:8 / biotype 1B (strain NCTC 13174 / 8081).